We begin with the raw amino-acid sequence, 175 residues long: Nucleoplasmin-3 (175 aa).

The residue at position 2 (alanine 2) is an N-acetylalanine. Serine 16 is subject to Phosphoserine. Omega-N-methylarginine is present on arginine 27. Phosphoserine occurs at positions 147 and 151.

This sequence belongs to the nucleoplasmin family. Interacts with NPM (via N-terminus). Forms a pentamer with NPM at a ratio 4:1 (NPM3/NPM). Two pentamers form a decamer. In terms of processing, phosphorylated. As to expression, predominantly expressed in testis.

It is found in the nucleus. Its subcellular location is the nucleolus. Its function is as follows. Plays a role in the regulation of diverse cellular processes such as ribosome biogenesis, chromatin remodeling or protein chaperoning. Modulates the histone chaperone function and the RNA-binding activity of nucleolar phosphoprotein B23/NPM. Efficiently mediates chromatin remodeling when included in a pentamer containing NPM3 and NPM. The polypeptide is Nucleoplasmin-3 (Npm3) (Mus musculus (Mouse)).